Here is a 244-residue protein sequence, read N- to C-terminus: Small ribosomal subunit protein uS3 (244 aa).

The KH type-2 domain maps to 39-107; it reads VREMLRKKLA…PAHINVTEVR (69 aa). Residues 213-244 are disordered; that stretch reads VGQEKQDDSPRNDRNDRGDRGDRPSRPAREAR. A compositionally biased stretch (basic and acidic residues) spans 216–244; the sequence is EKQDDSPRNDRNDRGDRGDRPSRPAREAR.

Belongs to the universal ribosomal protein uS3 family. In terms of assembly, part of the 30S ribosomal subunit. Forms a tight complex with proteins S10 and S14.

In terms of biological role, binds the lower part of the 30S subunit head. Binds mRNA in the 70S ribosome, positioning it for translation. The polypeptide is Small ribosomal subunit protein uS3 (Xanthomonas campestris pv. campestris (strain 8004)).